A 436-amino-acid chain; its full sequence is 3-ketoacyl-CoA thiolase (436 aa).

The Acyl-thioester intermediate role is filled by C99. Catalysis depends on proton acceptor residues H392 and C422.

It belongs to the thiolase-like superfamily. Thiolase family. As to quaternary structure, heterotetramer of two alpha chains (FadJ) and two beta chains (FadI).

Its subcellular location is the cytoplasm. It carries out the reaction an acyl-CoA + acetyl-CoA = a 3-oxoacyl-CoA + CoA. The protein operates within lipid metabolism; fatty acid beta-oxidation. Catalyzes the final step of fatty acid oxidation in which acetyl-CoA is released and the CoA ester of a fatty acid two carbons shorter is formed. This is 3-ketoacyl-CoA thiolase from Shewanella baltica (strain OS185).